The sequence spans 629 residues: 1-deoxy-D-xylulose-5-phosphate synthase (629 aa).

Thiamine diphosphate is bound by residues H72 and G113–A115. D144 contacts Mg(2+). Thiamine diphosphate is bound by residues G145–A146, N174, Y287, and E370. N174 contacts Mg(2+).

It belongs to the transketolase family. DXPS subfamily. As to quaternary structure, homodimer. Requires Mg(2+) as cofactor. It depends on thiamine diphosphate as a cofactor.

It catalyses the reaction D-glyceraldehyde 3-phosphate + pyruvate + H(+) = 1-deoxy-D-xylulose 5-phosphate + CO2. The protein operates within metabolic intermediate biosynthesis; 1-deoxy-D-xylulose 5-phosphate biosynthesis; 1-deoxy-D-xylulose 5-phosphate from D-glyceraldehyde 3-phosphate and pyruvate: step 1/1. Functionally, catalyzes the acyloin condensation reaction between C atoms 2 and 3 of pyruvate and glyceraldehyde 3-phosphate to yield 1-deoxy-D-xylulose-5-phosphate (DXP). This chain is 1-deoxy-D-xylulose-5-phosphate synthase, found in Prochlorococcus marinus (strain MIT 9301).